A 123-amino-acid chain; its full sequence is Holo-[acyl-carrier-protein] synthase (123 aa).

Mg(2+) is bound by residues aspartate 8 and glutamate 56.

This sequence belongs to the P-Pant transferase superfamily. AcpS family. It depends on Mg(2+) as a cofactor.

It localises to the cytoplasm. The catalysed reaction is apo-[ACP] + CoA = holo-[ACP] + adenosine 3',5'-bisphosphate + H(+). Functionally, transfers the 4'-phosphopantetheine moiety from coenzyme A to a Ser of acyl-carrier-protein. The protein is Holo-[acyl-carrier-protein] synthase of Clostridium beijerinckii (strain ATCC 51743 / NCIMB 8052) (Clostridium acetobutylicum).